The following is a 212-amino-acid chain: Thymidylate kinase (212 aa).

10-17 (GLEGAGKT) lines the ATP pocket.

This sequence belongs to the thymidylate kinase family.

The catalysed reaction is dTMP + ATP = dTDP + ADP. Its function is as follows. Phosphorylation of dTMP to form dTDP in both de novo and salvage pathways of dTTP synthesis. The protein is Thymidylate kinase of Yersinia pseudotuberculosis serotype O:3 (strain YPIII).